Reading from the N-terminus, the 456-residue chain is E3 ubiquitin-protein ligase PUB24 (456 aa).

A U-box domain is found at 9–83; the sequence is EIPNYFICPI…QHWCVENETR (75 aa).

Post-translationally, auto-ubiquitinated.

The enzyme catalyses S-ubiquitinyl-[E2 ubiquitin-conjugating enzyme]-L-cysteine + [acceptor protein]-L-lysine = [E2 ubiquitin-conjugating enzyme]-L-cysteine + N(6)-ubiquitinyl-[acceptor protein]-L-lysine.. It participates in protein modification; protein ubiquitination. Functionally, E3 ubiquitin-protein ligase that acts as a negative regulator of the immunity triggered by the pathogen-associated molecular patterns (PAMPs), in association with PUB22 and PUB23. This chain is E3 ubiquitin-protein ligase PUB24 (PUB24), found in Arabidopsis thaliana (Mouse-ear cress).